A 215-amino-acid chain; its full sequence is Large ribosomal subunit protein uL16 (215 aa).

It belongs to the universal ribosomal protein uL16 family. Component of the small ribosomal subunit. Mature ribosomes consist of a small (40S) and a large (60S) subunit. The 40S subunit contains about 33 different proteins and 1 molecule of RNA (18S). The 60S subunit contains about 49 different proteins and 3 molecules of RNA (25S, 5.8S and 5S).

This chain is Large ribosomal subunit protein uL16 (RPL10), found in Euglena gracilis.